We begin with the raw amino-acid sequence, 506 residues long: Lysine--tRNA ligase (506 aa).

Residues glutamate 415 and glutamate 422 each contribute to the Mg(2+) site.

This sequence belongs to the class-II aminoacyl-tRNA synthetase family. As to quaternary structure, homodimer. It depends on Mg(2+) as a cofactor.

The protein localises to the cytoplasm. It carries out the reaction tRNA(Lys) + L-lysine + ATP = L-lysyl-tRNA(Lys) + AMP + diphosphate. The polypeptide is Lysine--tRNA ligase (lysS) (Buchnera aphidicola subsp. Acyrthosiphon pisum (strain APS) (Acyrthosiphon pisum symbiotic bacterium)).